The chain runs to 169 residues: N-alpha-acetyltransferase 50 (169 aa).

Residues 5–154 (IELGDVTPHN…DAHVLQKNLK (150 aa)) enclose the N-acetyltransferase domain. Position 30 (Y30) interacts with substrate. The active site involves Y72. M74 is a substrate binding site. 76 to 89 (LGCLAPYRRLGIGT) provides a ligand contact to acetyl-CoA. 78–89 (CLAPYRRLGIGT) provides a ligand contact to CoA. H111 is an active-site residue. 116–125 (NESAIDFYRK) is a CoA binding site. The substrate stretch occupies residues 137–140 (YYKR).

Belongs to the acetyltransferase family. GNAT subfamily.

It is found in the cytoplasm. The protein localises to the nucleus. The enzyme catalyses N-terminal L-methionyl-L-alanyl-[protein] + acetyl-CoA = N-terminal N(alpha)-acetyl-L-methionyl-L-alanyl-[protein] + CoA + H(+). It catalyses the reaction N-terminal L-methionyl-L-seryl-[protein] + acetyl-CoA = N-terminal N(alpha)-acetyl-L-methionyl-L-seryl-[protein] + CoA + H(+). It carries out the reaction N-terminal L-methionyl-L-valyl-[protein] + acetyl-CoA = N-terminal N(alpha)-acetyl-L-methionyl-L-valyl-[protein] + CoA + H(+). The catalysed reaction is N-terminal L-methionyl-L-threonyl-[protein] + acetyl-CoA = N-terminal N(alpha)-acetyl-L-methionyl-L-threonyl-[protein] + CoA + H(+). The enzyme catalyses N-terminal L-methionyl-L-lysyl-[protein] + acetyl-CoA = N-terminal N(alpha)-acetyl-L-methionyl-L-lysyl-[protein] + CoA + H(+). It catalyses the reaction N-terminal L-methionyl-L-leucyl-[protein] + acetyl-CoA = N-terminal N(alpha)-acetyl-L-methionyl-L-leucyl-[protein] + CoA + H(+). It carries out the reaction N-terminal L-methionyl-L-phenylalanyl-[protein] + acetyl-CoA = N-terminal N(alpha)-acetyl-L-methionyl-L-phenylalanyl-[protein] + CoA + H(+). The catalysed reaction is N-terminal L-methionyl-L-tyrosyl-[protein] + acetyl-CoA = N-terminal N(alpha)-acetyl-L-methionyl-L-tyrosyl-[protein] + CoA + H(+). N-alpha-acetyltransferase that acetylates the N-terminus of proteins that retain their initiating methionine. Has a broad substrate specificity: able to acetylate the initiator methionine of most peptides, except for those with a proline in second position. Also displays N-epsilon-acetyltransferase activity by mediating acetylation of the side chain of specific lysines on proteins. The relevance of N-epsilon-acetyltransferase activity is however unclear. Required for sister chromatid cohesion during mitosis by promoting binding of CDCA5/sororin to cohesin. The protein is N-alpha-acetyltransferase 50 (naa50) of Xenopus tropicalis (Western clawed frog).